The following is a 99-amino-acid chain: Acylphosphatase (99 aa).

The Acylphosphatase-like domain occupies 5–97; the sequence is VRQIVIRGRV…RPGERFSQLP (93 aa). Residues Arg20 and Asn38 contribute to the active site.

It belongs to the acylphosphatase family.

It catalyses the reaction an acyl phosphate + H2O = a carboxylate + phosphate + H(+). In Nitrobacter hamburgensis (strain DSM 10229 / NCIMB 13809 / X14), this protein is Acylphosphatase (acyP).